The primary structure comprises 328 residues: L-serine dehydratase/L-threonine deaminase (328 aa).

At lysine 41 the chain carries N6-(pyridoxal phosphate)lysine. Proline 128 is a binding site for pyridoxal 5'-phosphate.

It belongs to the serine/threonine dehydratase family. As to quaternary structure, homodimer. Pyridoxal 5'-phosphate is required as a cofactor. As to expression, predominantly expressed in the perivenous regions of the liver.

It localises to the cytoplasm. The catalysed reaction is L-serine = pyruvate + NH4(+). It carries out the reaction L-threonine = 2-oxobutanoate + NH4(+). The protein operates within carbohydrate biosynthesis; gluconeogenesis. Functionally, catalyzes the pyridoxal-phosphate-dependent dehydrative deamination of L-threonine and L-serine to ammonia and alpha-ketobutyrate and pyruvate, respectively. The protein is L-serine dehydratase/L-threonine deaminase (SDS) of Homo sapiens (Human).